Reading from the N-terminus, the 250-residue chain is Global transcriptional regulator CodY (250 aa).

The segment at 1–147 (MSTLLEKTRK…GATVVGLEIL (147 aa)) is GAF domain. Residues 195 to 214 (ASKIADKVGITRSVIVNALR) constitute a DNA-binding region (H-T-H motif).

Belongs to the CodY family.

It localises to the cytoplasm. DNA-binding global transcriptional regulator which is involved in the adaptive response to starvation and acts by directly or indirectly controlling the expression of numerous genes in response to nutrient availability. During rapid exponential growth, CodY is highly active and represses genes whose products allow adaptation to nutrient depletion. In Thermoanaerobacter sp. (strain X514), this protein is Global transcriptional regulator CodY.